Consider the following 402-residue polypeptide: Formate-dependent phosphoribosylglycinamide formyltransferase (402 aa).

N(1)-(5-phospho-beta-D-ribosyl)glycinamide is bound by residues 22–23 and Glu82; that span reads EL. ATP contacts are provided by residues Arg115, Lys160, 165-170, 200-203, and Glu208; these read SSGKGQ and EGFV. The region spanning 120-318 is the ATP-grasp domain; the sequence is RLAAETLGLP…EFELHARAIL (199 aa). The Mg(2+) site is built by Glu277 and Glu289. N(1)-(5-phospho-beta-D-ribosyl)glycinamide-binding positions include Asp296, Lys365, and 372 to 373; that span reads RR.

The protein belongs to the PurK/PurT family. In terms of assembly, homodimer.

It carries out the reaction N(1)-(5-phospho-beta-D-ribosyl)glycinamide + formate + ATP = N(2)-formyl-N(1)-(5-phospho-beta-D-ribosyl)glycinamide + ADP + phosphate + H(+). Its pathway is purine metabolism; IMP biosynthesis via de novo pathway; N(2)-formyl-N(1)-(5-phospho-D-ribosyl)glycinamide from N(1)-(5-phospho-D-ribosyl)glycinamide (formate route): step 1/1. Functionally, involved in the de novo purine biosynthesis. Catalyzes the transfer of formate to 5-phospho-ribosyl-glycinamide (GAR), producing 5-phospho-ribosyl-N-formylglycinamide (FGAR). Formate is provided by PurU via hydrolysis of 10-formyl-tetrahydrofolate. The polypeptide is Formate-dependent phosphoribosylglycinamide formyltransferase (Mycobacteroides abscessus (strain ATCC 19977 / DSM 44196 / CCUG 20993 / CIP 104536 / JCM 13569 / NCTC 13031 / TMC 1543 / L948) (Mycobacterium abscessus)).